We begin with the raw amino-acid sequence, 97 residues long: MKRICSIYKSPRKNEMYLYVLKAEGLERVPEALLPFFGTPVHAFDLVLSPERKLAREDIVKVLDNLENQGYHLQMPPAEDEYIEHLPEELLRRNDPV.

Residues 3-87 (RICSIYKSPR…AEDEYIEHLP (85 aa)) enclose the YcgL domain.

This Pseudomonas putida (strain W619) protein is YcgL domain-containing protein PputW619_3899.